A 533-amino-acid polypeptide reads, in one-letter code: MARLPAGIRFIISFSRDQWYRAFIFILTFLLYASFHLSRKPISIVKGELHKYCTAWDEADVRFSSQNRKSGSAAPHQLPDNETDCGWAPFDKNNYQQLLGALDYSFLCAYAVGMYLSGIIGERLPIRYYLTFGMLASGAFTALFGLGYFYNIHSFGFYVVTQVINGLVQTTGWPSVVTCLGNWFGKGRRGLIMGVWNSHTSVGNILGSLIAGYWVSTCWGLSFVVPGAIVAAMGIVCFLFLIEHPNDVRCSSTLVTHSKGYENGTNRLRLQKQILKSEKNKPLDPEMQCLLLSDGKGSIHPNHVVILPGDGGSGTAAISFTGALKIPGVIEFSLCLLFAKLVSYTFLFWLPLYITNVDHLDAKKAGELSTLFDVGGIFGGILAGVISDRLEKRASTCGLMLLLAAPTLYIFSTVSKMGLEATIAMLLLSGALVSGPYTLITTAVSADLGTHKSLKGNAHALSTVTAIIDGTGSVGAALGPLLAGLLSPSGWSNVFYMLMFADACALLFLIRLIHKELSCPGSATGDQVPFKEQ.

A helical transmembrane segment spans residues 18–38 (QWYRAFIFILTFLLYASFHLS). Asn81 is a glycosylation site (N-linked (GlcNAc...) asparagine). 4 helical membrane-spanning segments follow: residues 100-120 (GALD…SGII), 129-149 (YLTF…LGYF), 157-177 (FYVV…PSVV), and 222-242 (SFVV…LFLI). N-linked (GlcNAc...) asparagine glycosylation is present at Asn263. 7 consecutive transmembrane segments (helical) span residues 304–324 (VVIL…TGAL), 334–354 (LCLL…PLYI), 366–386 (GELS…AGVI), 394–414 (ASTC…FSTV), 423–443 (IAML…ITTA), 466–486 (AIID…AGLL), and 490–510 (GWSN…LFLI).

This sequence belongs to the major facilitator superfamily. Organophosphate:Pi antiporter (OPA) (TC 2.A.1.4) family. In terms of tissue distribution, expressed in numerous tissues, with highest expression in pancreas, kidney, bone marrow, spleen, liver, small intestine, as well as in fetal brain, liver and spleen.

The protein resides in the endoplasmic reticulum membrane. The catalysed reaction is D-glucose 6-phosphate(in) + phosphate(out) = D-glucose 6-phosphate(out) + phosphate(in). With respect to regulation, inhibited by vanadate but not by chlorogenic acid. Functionally, inorganic phosphate and glucose-6-phosphate antiporter. May transport cytoplasmic glucose-6-phosphate into the lumen of the endoplasmic reticulum and translocate inorganic phosphate into the opposite direction. Independent of a lumenal glucose-6-phosphatase. May not play a role in homeostatic regulation of blood glucose levels. The sequence is that of Glucose-6-phosphate exchanger SLC37A1 from Homo sapiens (Human).